Reading from the N-terminus, the 261-residue chain is Pimeloyl-[acyl-carrier protein] methyl ester esterase (261 aa).

The AB hydrolase-1 domain occupies 16-241 (LVLLHGWGLN…HAAHAPFISH (226 aa)). Residues Trp22, 82 to 83 (SL), and 143 to 147 (FLALQ) each bind substrate. The active-site Nucleophile is Ser82. Residues Asp207 and His235 contribute to the active site. Position 235 (His235) interacts with substrate.

It belongs to the AB hydrolase superfamily. Carboxylesterase BioH family. As to quaternary structure, monomer.

It localises to the cytoplasm. It carries out the reaction 6-carboxyhexanoyl-[ACP] methyl ester + H2O = 6-carboxyhexanoyl-[ACP] + methanol + H(+). It participates in cofactor biosynthesis; biotin biosynthesis. In terms of biological role, the physiological role of BioH is to remove the methyl group introduced by BioC when the pimeloyl moiety is complete. It allows to synthesize pimeloyl-ACP via the fatty acid synthetic pathway through the hydrolysis of the ester bonds of pimeloyl-ACP esters. The sequence is that of Pimeloyl-[acyl-carrier protein] methyl ester esterase from Photorhabdus laumondii subsp. laumondii (strain DSM 15139 / CIP 105565 / TT01) (Photorhabdus luminescens subsp. laumondii).